The primary structure comprises 168 residues: uncharacterized protein (168 aa).

Residues 24–44 (FIGIVLFLAVLIIGILILILF) form a helical membrane-spanning segment. Disordered regions lie at residues 69 to 92 (SPSSSFLINNNNNNNNYHQNNNSN) and 142 to 168 (NNNNNNNNNPPTNISNKLNKNGETKNI). The span at 142–157 (NNNNNNNNNPPTNISN) shows a compositional bias: low complexity.

Its subcellular location is the membrane. This is an uncharacterized protein from Dictyostelium discoideum (Social amoeba).